We begin with the raw amino-acid sequence, 77 residues long: U8-lycotoxin-Ls1t (77 aa).

Positions 1–20 (MKLIIFTGLVPFAIVSLIEA) are cleaved as a signal peptide. Residues 21–26 (QAENEK) constitute a propeptide that is removed on maturation.

The protein belongs to the neurotoxin 19 (CSTX) family. 08 (U8-Lctx) subfamily. In terms of processing, contains 4 disulfide bonds. In terms of tissue distribution, expressed by the venom gland.

Its subcellular location is the secreted. This Lycosa singoriensis (Wolf spider) protein is U8-lycotoxin-Ls1t.